We begin with the raw amino-acid sequence, 354 residues long: Neuronal growth regulator 1 (354 aa).

An N-terminal signal peptide occupies residues 1–37 (MDMMLLVQGACCSNQWLAAVLLSLCCLLPSCLPAGQS). Ig-like C2-type domains follow at residues 38–134 (VDFP…VHLT), 139–221 (PKIY…KVVV), and 225–313 (PTIQ…LPLN). The cysteines at positions 60 and 118 are disulfide-linked. N-linked (GlcNAc...) asparagine glycans are attached at residues Asn-73 and Asn-155. Cystine bridges form between Cys-160/Cys-203 and Cys-245/Cys-297. Tyr-187 is modified (phosphotyrosine). N-linked (GlcNAc...) asparagine glycosylation is found at Asn-275, Asn-286, Asn-294, and Asn-307. Gly-324 is lipidated: GPI-anchor amidated glycine. The propeptide at 325–354 (SADVLFSCWYLVLTLSSFTSIFYLKNAILQ) is removed in mature form.

The protein belongs to the immunoglobulin superfamily. IgLON family.

Its subcellular location is the cell membrane. Functionally, may be involved in cell-adhesion. May function as a trans-neural growth-promoting factor in regenerative axon sprouting in the mammalian brain. The polypeptide is Neuronal growth regulator 1 (NEGR1) (Pongo abelii (Sumatran orangutan)).